Here is a 420-residue protein sequence, read N- to C-terminus: Argininosuccinate synthase (420 aa).

ATP is bound at residue 11-19 (AFSGGLDTT). Tyr88 lines the L-citrulline pocket. ATP is bound at residue Gly118. Residues Thr120, Asn124, and Asp125 each contribute to the L-aspartate site. Position 124 (Asn124) interacts with L-citrulline. L-citrulline-binding residues include Arg128, Ser174, Ser183, Glu257, and Tyr269. The segment at 401-420 (KGAAVTDGSGDHAASEDTEE) is disordered. Over residues 409-420 (SGDHAASEDTEE) the composition is skewed to basic and acidic residues.

The protein belongs to the argininosuccinate synthase family. Type 1 subfamily. Homotetramer.

Its subcellular location is the cytoplasm. It catalyses the reaction L-citrulline + L-aspartate + ATP = 2-(N(omega)-L-arginino)succinate + AMP + diphosphate + H(+). It participates in amino-acid biosynthesis; L-arginine biosynthesis; L-arginine from L-ornithine and carbamoyl phosphate: step 2/3. This chain is Argininosuccinate synthase, found in Haloarcula marismortui (strain ATCC 43049 / DSM 3752 / JCM 8966 / VKM B-1809) (Halobacterium marismortui).